A 249-amino-acid polypeptide reads, in one-letter code: NAD kinase (249 aa).

The Proton acceptor role is filled by Asp45. NAD(+)-binding positions include 45 to 46 (DG), Arg50, 110 to 111 (NE), Asp138, and 149 to 154 (SGWGMS).

The protein belongs to the NAD kinase family. It depends on a divalent metal cation as a cofactor.

It localises to the cytoplasm. The enzyme catalyses NAD(+) + ATP = ADP + NADP(+) + H(+). Its function is as follows. Involved in the regulation of the intracellular balance of NAD and NADP, and is a key enzyme in the biosynthesis of NADP. Catalyzes specifically the phosphorylation on 2'-hydroxyl of the adenosine moiety of NAD to yield NADP. This is NAD kinase from Saccharolobus solfataricus (strain ATCC 35092 / DSM 1617 / JCM 11322 / P2) (Sulfolobus solfataricus).